The following is a 159-amino-acid chain: 6,7-dimethyl-8-ribityllumazine synthase (159 aa).

Residues tryptophan 26, 57–59 (ALE), and 79–81 (CVV) each bind 5-amino-6-(D-ribitylamino)uracil. 84-85 (GT) contacts (2S)-2-hydroxy-3-oxobutyl phosphate. Histidine 87 (proton donor) is an active-site residue. Asparagine 112 contributes to the 5-amino-6-(D-ribitylamino)uracil binding site. Arginine 126 is a binding site for (2S)-2-hydroxy-3-oxobutyl phosphate.

Belongs to the DMRL synthase family.

It catalyses the reaction (2S)-2-hydroxy-3-oxobutyl phosphate + 5-amino-6-(D-ribitylamino)uracil = 6,7-dimethyl-8-(1-D-ribityl)lumazine + phosphate + 2 H2O + H(+). Its pathway is cofactor biosynthesis; riboflavin biosynthesis; riboflavin from 2-hydroxy-3-oxobutyl phosphate and 5-amino-6-(D-ribitylamino)uracil: step 1/2. In terms of biological role, catalyzes the formation of 6,7-dimethyl-8-ribityllumazine by condensation of 5-amino-6-(D-ribitylamino)uracil with 3,4-dihydroxy-2-butanone 4-phosphate. This is the penultimate step in the biosynthesis of riboflavin. The sequence is that of 6,7-dimethyl-8-ribityllumazine synthase from Corynebacterium glutamicum (strain ATCC 13032 / DSM 20300 / JCM 1318 / BCRC 11384 / CCUG 27702 / LMG 3730 / NBRC 12168 / NCIMB 10025 / NRRL B-2784 / 534).